A 238-amino-acid polypeptide reads, in one-letter code: Small ribosomal subunit protein uS2 (238 aa).

Belongs to the universal ribosomal protein uS2 family.

The polypeptide is Small ribosomal subunit protein uS2 (Prochlorococcus marinus (strain SARG / CCMP1375 / SS120)).